A 128-amino-acid polypeptide reads, in one-letter code: Fluoride-specific ion channel FluC (128 aa).

4 helical membrane-spanning segments follow: residues 4–24, 39–59, 71–91, and 99–119; these read LLLALIVGLGGFLGASLRYLI, GTLIANILGALLIGFIMEFSM, FLTTGIMGGLTTFSTFSYETI, and MTLGIENIILNLGCSLLFVVI. Na(+) contacts are provided by Gly78 and Thr81.

This sequence belongs to the fluoride channel Fluc/FEX (TC 1.A.43) family.

It localises to the cell membrane. The catalysed reaction is fluoride(in) = fluoride(out). Na(+) is not transported, but it plays an essential structural role and its presence is essential for fluoride channel function. In terms of biological role, fluoride-specific ion channel. Important for reducing fluoride concentration in the cell, thus reducing its toxicity. In Clostridium perfringens (strain 13 / Type A), this protein is Fluoride-specific ion channel FluC.